The sequence spans 180 residues: uncharacterized protein (180 aa).

The 180-residue stretch at 1–180 (MVEFEIVKGD…KDYERALRAV (180 aa)) folds into the Macro domain.

This is an uncharacterized protein from Thermococcus kodakarensis (strain ATCC BAA-918 / JCM 12380 / KOD1) (Pyrococcus kodakaraensis (strain KOD1)).